Here is a 279-residue protein sequence, read N- to C-terminus: Eukaryotic translation initiation factor 3 subunit G (279 aa).

Disordered stretches follow at residues 69-90 (AKYG…QLGE) and 149-193 (LNGG…EARD). The residue at position 77 (Ser-77) is a Phosphoserine. An RRM domain is found at 196–275 (TTLKVSQLNT…LILHLEWSKK (80 aa)).

It belongs to the eIF-3 subunit G family. As to quaternary structure, component of the eukaryotic translation initiation factor 3 (eIF-3) complex.

It localises to the cytoplasm. In terms of biological role, RNA-binding component of the eukaryotic translation initiation factor 3 (eIF-3) complex, which is involved in protein synthesis of a specialized repertoire of mRNAs and, together with other initiation factors, stimulates binding of mRNA and methionyl-tRNAi to the 40S ribosome. The eIF-3 complex specifically targets and initiates translation of a subset of mRNAs involved in cell proliferation. This subunit can bind 18S rRNA. This chain is Eukaryotic translation initiation factor 3 subunit G, found in Lodderomyces elongisporus (strain ATCC 11503 / CBS 2605 / JCM 1781 / NBRC 1676 / NRRL YB-4239) (Yeast).